Reading from the N-terminus, the 312-residue chain is Cobalamin biosynthesis protein CobD (312 aa).

4 consecutive transmembrane segments (helical) span residues 61 to 81 (IALLLAPFTLAAWALARLPLL), 83 to 103 (IIVPVALLYLAVGARSLAQHA), 152 to 172 (DAVFAALFWFLVLGAPGAVLY), and 292 to 312 (GMWLWAALSLAAAILIGAIHA).

Belongs to the CobD/CbiB family.

The protein localises to the cell membrane. It participates in cofactor biosynthesis; adenosylcobalamin biosynthesis. In terms of biological role, converts cobyric acid to cobinamide by the addition of aminopropanol on the F carboxylic group. The sequence is that of Cobalamin biosynthesis protein CobD from Chromobacterium violaceum (strain ATCC 12472 / DSM 30191 / JCM 1249 / CCUG 213 / NBRC 12614 / NCIMB 9131 / NCTC 9757 / MK).